A 94-amino-acid polypeptide reads, in one-letter code: Large ribosomal subunit protein uL23 (94 aa).

It belongs to the universal ribosomal protein uL23 family. In terms of assembly, part of the 50S ribosomal subunit. Contacts protein L29, and trigger factor when it is bound to the ribosome.

One of the early assembly proteins it binds 23S rRNA. One of the proteins that surrounds the polypeptide exit tunnel on the outside of the ribosome. Forms the main docking site for trigger factor binding to the ribosome. The protein is Large ribosomal subunit protein uL23 of Treponema denticola (strain ATCC 35405 / DSM 14222 / CIP 103919 / JCM 8153 / KCTC 15104).